A 452-amino-acid chain; its full sequence is Phosphoglucosamine mutase (452 aa).

Ser-97 functions as the Phosphoserine intermediate in the catalytic mechanism. Mg(2+) contacts are provided by Ser-97, Asp-236, Asp-238, and Asp-240. Ser-97 is subject to Phosphoserine.

This sequence belongs to the phosphohexose mutase family. The cofactor is Mg(2+). Activated by phosphorylation.

The enzyme catalyses alpha-D-glucosamine 1-phosphate = D-glucosamine 6-phosphate. Functionally, catalyzes the conversion of glucosamine-6-phosphate to glucosamine-1-phosphate. This is Phosphoglucosamine mutase from Prochlorococcus marinus (strain MIT 9515).